A 166-amino-acid polypeptide reads, in one-letter code: Nucleotide-binding protein CV_2047 (166 aa).

Belongs to the YajQ family.

Nucleotide-binding protein. This chain is Nucleotide-binding protein CV_2047, found in Chromobacterium violaceum (strain ATCC 12472 / DSM 30191 / JCM 1249 / CCUG 213 / NBRC 12614 / NCIMB 9131 / NCTC 9757 / MK).